Consider the following 164-residue polypeptide: Peptide methionine sulfoxide reductase MsrA (164 aa).

C16 is a catalytic residue.

The protein belongs to the MsrA Met sulfoxide reductase family.

It catalyses the reaction L-methionyl-[protein] + [thioredoxin]-disulfide + H2O = L-methionyl-(S)-S-oxide-[protein] + [thioredoxin]-dithiol. The catalysed reaction is [thioredoxin]-disulfide + L-methionine + H2O = L-methionine (S)-S-oxide + [thioredoxin]-dithiol. Its function is as follows. Has an important function as a repair enzyme for proteins that have been inactivated by oxidation. Catalyzes the reversible oxidation-reduction of methionine sulfoxide in proteins to methionine. This Methanoculleus marisnigri (strain ATCC 35101 / DSM 1498 / JR1) protein is Peptide methionine sulfoxide reductase MsrA.